Here is a 227-residue protein sequence, read N- to C-terminus: Nucleoside triphosphate pyrophosphatase (227 aa).

Catalysis depends on Asp-77, which acts as the Proton acceptor.

This sequence belongs to the Maf family. The cofactor is a divalent metal cation.

The protein localises to the cytoplasm. The enzyme catalyses a ribonucleoside 5'-triphosphate + H2O = a ribonucleoside 5'-phosphate + diphosphate + H(+). It carries out the reaction a 2'-deoxyribonucleoside 5'-triphosphate + H2O = a 2'-deoxyribonucleoside 5'-phosphate + diphosphate + H(+). Functionally, nucleoside triphosphate pyrophosphatase. May have a dual role in cell division arrest and in preventing the incorporation of modified nucleotides into cellular nucleic acids. The chain is Nucleoside triphosphate pyrophosphatase from Rickettsia typhi (strain ATCC VR-144 / Wilmington).